The primary structure comprises 77 residues: MSKTHPPELKKYMDKEMDLKLNGNRRVSGILRGFDPFMNMVIDEAVEYQKDGGSVNLGMTVIRGNSVVIMEPKERIS.

Residues 4–76 (THPPELKKYM…VVIMEPKERI (73 aa)) form the Sm domain.

It belongs to the snRNP Sm proteins family. In terms of assembly, core component of the spliceosomal U1, U2, U4 and U5 small nuclear ribonucleoproteins (snRNPs), the building blocks of the spliceosome.

It localises to the cytoplasm. The protein resides in the cytosol. The protein localises to the nucleus. Plays a role in pre-mRNA splicing as a core component of the spliceosomal U1, U2, U4 and U5 small nuclear ribonucleoproteins (snRNPs), the building blocks of the spliceosome. In Caenorhabditis elegans, this protein is Probable small nuclear ribonucleoprotein G (snr-7).